A 784-amino-acid chain; its full sequence is DNA repair and recombination protein RAD54-like (784 aa).

Positions M1 to A50 are disordered. The interval R2–Q9 is required for chromatin remodeling, strand pairing activities and coupling of ATPase activity. The residue at position 20 (S20) is a Phosphoserine. T22 is modified (phosphothreonine). The segment covering E36–R47 has biased composition (basic and acidic residues). Residues E172 to E346 form the Helicase ATP-binding domain. ATP is bound at residue D185–T192. Positions D297 to H300 match the DEGH box motif. The region spanning L503–T660 is the Helicase C-terminal domain. The span at V747–E756 shows a compositional bias: low complexity. Residues V747–F784 are disordered. Acidic residues predominate over residues D775 to F784.

It belongs to the SNF2/RAD54 helicase family. As to quaternary structure, interacts (via N-terminus) with spn-A/Rad51.

It localises to the nucleus. Functionally, involved in mitotic DNA repair and meiotic recombination. Functions in the recombinational DNA repair pathway. Essential for interhomolog gene conversion (GC), but may have a less important role in intersister GC than spn-A/Rad51. In the presence of DNA, spn-A/Rad51 enhances the ATPase activity of okr/Rad54. This chain is DNA repair and recombination protein RAD54-like, found in Drosophila erecta (Fruit fly).